The sequence spans 305 residues: UDP-3-O-acyl-N-acetylglucosamine deacetylase (305 aa).

Zn(2+) contacts are provided by histidine 78, histidine 237, and aspartate 241. The active-site Proton donor is histidine 264.

Belongs to the LpxC family. It depends on Zn(2+) as a cofactor.

The catalysed reaction is a UDP-3-O-[(3R)-3-hydroxyacyl]-N-acetyl-alpha-D-glucosamine + H2O = a UDP-3-O-[(3R)-3-hydroxyacyl]-alpha-D-glucosamine + acetate. It participates in glycolipid biosynthesis; lipid IV(A) biosynthesis; lipid IV(A) from (3R)-3-hydroxytetradecanoyl-[acyl-carrier-protein] and UDP-N-acetyl-alpha-D-glucosamine: step 2/6. In terms of biological role, catalyzes the hydrolysis of UDP-3-O-myristoyl-N-acetylglucosamine to form UDP-3-O-myristoylglucosamine and acetate, the committed step in lipid A biosynthesis. The chain is UDP-3-O-acyl-N-acetylglucosamine deacetylase from Cupriavidus necator (strain ATCC 17699 / DSM 428 / KCTC 22496 / NCIMB 10442 / H16 / Stanier 337) (Ralstonia eutropha).